We begin with the raw amino-acid sequence, 560 residues long: Radial spoke head protein 3 homolog (560 aa).

Disordered stretches follow at residues 134–186 (RKRG…EEPM) and 225–249 (ARKR…PVEG). Residues 153 to 162 (RAPSTYTYTS) show a composition bias toward polar residues. Residues 215-239 (DSLELQRQREARKRALARKQAQEQL) adopt a coiled-coil conformation. Position 286 is a phosphothreonine; by MAPK1 (Thr-286). Positions 331–385 (LEVMEEEELANLRASQREYEELRNSERAEVQRLEEQERRHREEKERRKKQQWEIM) form a coiled coil. Disordered regions lie at residues 354–375 (NSER…EEKE), 473–498 (HGED…ESLE), and 526–560 (DRRS…EELS).

Belongs to the flagellar radial spoke RSP3 family. As to quaternary structure, component of the axonemal radial spoke 1 (RS1) and 2 (RS2) complexes, at least composed of spoke head proteins RSPH1, RSPH3, RSPH9 and the cilia-specific component RSPH4A or sperm-specific component RSPH6A, spoke stalk proteins RSPH14, DNAJB13, DYDC1, ROPN1L and NME5, and the RS1 complex-specific anchor protein IQUB. Interacts with IQUB. Interacts with phosphorylated MAPK1. Interacts with MEK1. Interacts with PKA regulatory subunits PRKAR1A and PRKAR1B. Interacts with RSPH1. Interacts with RSPH4A. Interacts with RSPH6A. Interacts with RSPH9. Interacts with LRRC23.

The protein localises to the cytoplasm. It is found in the cytoskeleton. It localises to the cilium axoneme. Its subcellular location is the flagellum axoneme. In terms of biological role, functions as part of axonemal radial spoke complexes that play an important part in the motility of sperm and cilia. Functions as a protein kinase A-anchoring protein that scaffolds the cAMP-dependent protein kinase holoenzyme. May serve as a point of convergence for MAPK and PKA signaling in cilia. This is Radial spoke head protein 3 homolog (RSPH3) from Homo sapiens (Human).